The following is a 295-amino-acid chain: Pyridoxal 5'-phosphate synthase subunit PdxS (295 aa).

Aspartate 25 provides a ligand contact to D-ribose 5-phosphate. The active-site Schiff-base intermediate with D-ribose 5-phosphate is lysine 82. Glycine 154 is a binding site for D-ribose 5-phosphate. D-glyceraldehyde 3-phosphate is bound at residue arginine 166. D-ribose 5-phosphate-binding positions include glycine 215 and 236-237; that span reads GS.

This sequence belongs to the PdxS/SNZ family. As to quaternary structure, in the presence of PdxT, forms a dodecamer of heterodimers.

The catalysed reaction is aldehydo-D-ribose 5-phosphate + D-glyceraldehyde 3-phosphate + L-glutamine = pyridoxal 5'-phosphate + L-glutamate + phosphate + 3 H2O + H(+). The protein operates within cofactor biosynthesis; pyridoxal 5'-phosphate biosynthesis. Functionally, catalyzes the formation of pyridoxal 5'-phosphate from ribose 5-phosphate (RBP), glyceraldehyde 3-phosphate (G3P) and ammonia. The ammonia is provided by the PdxT subunit. Can also use ribulose 5-phosphate and dihydroxyacetone phosphate as substrates, resulting from enzyme-catalyzed isomerization of RBP and G3P, respectively. The polypeptide is Pyridoxal 5'-phosphate synthase subunit PdxS (Bacillus mycoides (strain KBAB4) (Bacillus weihenstephanensis)).